The following is a 365-amino-acid chain: Phospho-N-acetylmuramoyl-pentapeptide-transferase (365 aa).

A run of 10 helical transmembrane segments spans residues 29-49, 73-93, 97-117, 133-153, 171-191, 202-222, 242-262, 266-286, 291-311, and 341-361; these read VGGL…IIVW, GTPT…VIIW, SNIY…LGLV, ILNK…IMFI, IVCK…VGTS, GLVI…TWVV, LVVV…FNSY, IFMG…VSIL, YLLL…IFQV, and IVVR…VIFI.

This sequence belongs to the glycosyltransferase 4 family. MraY subfamily. Mg(2+) is required as a cofactor.

It localises to the cell inner membrane. The enzyme catalyses UDP-N-acetyl-alpha-D-muramoyl-L-alanyl-gamma-D-glutamyl-meso-2,6-diaminopimeloyl-D-alanyl-D-alanine + di-trans,octa-cis-undecaprenyl phosphate = di-trans,octa-cis-undecaprenyl diphospho-N-acetyl-alpha-D-muramoyl-L-alanyl-D-glutamyl-meso-2,6-diaminopimeloyl-D-alanyl-D-alanine + UMP. It functions in the pathway cell wall biogenesis; peptidoglycan biosynthesis. Functionally, catalyzes the initial step of the lipid cycle reactions in the biosynthesis of the cell wall peptidoglycan: transfers peptidoglycan precursor phospho-MurNAc-pentapeptide from UDP-MurNAc-pentapeptide onto the lipid carrier undecaprenyl phosphate, yielding undecaprenyl-pyrophosphoryl-MurNAc-pentapeptide, known as lipid I. In Blochmanniella floridana, this protein is Phospho-N-acetylmuramoyl-pentapeptide-transferase.